Here is a 436-residue protein sequence, read N- to C-terminus: F-box/LRR-repeat protein 20 (436 aa).

Residues 22 to 68 enclose the F-box domain; that stretch reads AVINKKLPKELLLRIFSFLDVVTLCRCAQVSRAWNVLALDGSNWQRI. LRR repeat units lie at residues 74–100, 101–126, 127–152, 153–178, 179–204, 205–230, 231–256, 257–282, 283–308, 309–334, 335–363, 364–388, and 389–414; these read QRDIEGRVVENISKRCGGFLRKLSLRG, CLGVGDNALRTFAQNCRNIEVLSLNG, CTKTTDATCTSLSKFCSKLRHLDLAS, CTSITNMSLKALSEGCPLLEQLNISW, CDQVTKDGIQALVRGCGGLKALFLKG, CTQLEDEALKYIGAHCPELVTLNLQT, CLQITDEGLITICRGCHKLQSLCASG, CSNITDAILNALGQNCPRLRILEVAR, CSQLTDVGFTTLARNCHELEKMDLEE, CVQITDSTLIQLSIHCPRLQVLSLSH, CELITDDGIRHLGNGACAHDQLEVIELDN, CPLITDASLEHLKSCHSLERIELYD, and CQQITRAGIKRLRTHLPNIKVHAYFA. Residue Thr-417 is modified to Phosphothreonine. Ser-421 is subject to Phosphoserine.

In terms of assembly, interacts with SKP1 and CUL1. As to expression, highly expressed in brain.

Its subcellular location is the cytoplasm. Its function is as follows. Substrate-recognition component of the SCF (SKP1-CUL1-F-box protein)-type E3 ubiquitin ligase complex. Isoform 3 regulates neural transmission by binding and ubiquitinating RIMS1, a modulator of presynaptic plasticity. In Mus musculus (Mouse), this protein is F-box/LRR-repeat protein 20 (Fbxl20).